A 305-amino-acid polypeptide reads, in one-letter code: Delta-9 acyl-lipid desaturase 1 (305 aa).

The tract at residues 1–20 is disordered; that stretch reads MSLSASEKEENNKKMAADKA. Helical transmembrane passes span 39-59 and 60-80; these read IVKAFASLFVHFLCLLAPFNF and TWPALRVALIVYTVGGLGITV. Fe cation-binding residues include His83, His88, His120, His123, and His124. Positions 83-88 match the Histidine box-1 motif; it reads HRNLAH. The Histidine box-2 motif lies at 120–124; that stretch reads HRYHH. The helical transmembrane segment at 180 to 200 threads the bilayer; the sequence is VLYHILTFGFLLYYFGGLSFL. Residues His223, His252, His255, and His256 each coordinate Fe cation. Positions 252 to 256 match the Histidine box-3 motif; sequence HNNHH. A helical transmembrane segment spans residues 268–288; that stretch reads WWQIDISWYIVRFLEIIGLAT.

Belongs to the fatty acid desaturase type 1 family. Fe cation serves as cofactor. In terms of tissue distribution, strongly expressed in inflorescence meristems, leaves, and flowers, and weakly in roots and seedpods.

It is found in the endoplasmic reticulum membrane. The protein resides in the plastid. It localises to the chloroplast membrane. Its pathway is lipid metabolism; polyunsaturated fatty acid biosynthesis. Functionally, involved in delta-9 desaturation of fatty acids. Involved in the production of very-long-chain fatty acids (VLCFAs). May desaturate chloroplastic monogalactosyl diacylglycerol (MGDG) and alter chloroplast membrane fluidity, which is required to prime a cold acclimation response. The protein is Delta-9 acyl-lipid desaturase 1 of Arabidopsis thaliana (Mouse-ear cress).